The following is a 205-amino-acid chain: Holliday junction branch migration complex subunit RuvA (205 aa).

The segment at 1–64 (MIGRLRGIIL…EDAQLLYGFN (64 aa)) is domain I. Residues 65–143 (DKQERALFRE…GLNGDLFNNT (79 aa)) are domain II. The interval 144 to 156 (GDIQLPASNSSQI) is flexible linker. Residues 157–205 (SDADIEAEAASALVALGYKPQEASRLVSKIAKPGADCETLIRDALRAAL) are domain III.

This sequence belongs to the RuvA family. Homotetramer. Forms an RuvA(8)-RuvB(12)-Holliday junction (HJ) complex. HJ DNA is sandwiched between 2 RuvA tetramers; dsDNA enters through RuvA and exits via RuvB. An RuvB hexamer assembles on each DNA strand where it exits the tetramer. Each RuvB hexamer is contacted by two RuvA subunits (via domain III) on 2 adjacent RuvB subunits; this complex drives branch migration. In the full resolvosome a probable DNA-RuvA(4)-RuvB(12)-RuvC(2) complex forms which resolves the HJ.

The protein localises to the cytoplasm. Functionally, the RuvA-RuvB-RuvC complex processes Holliday junction (HJ) DNA during genetic recombination and DNA repair, while the RuvA-RuvB complex plays an important role in the rescue of blocked DNA replication forks via replication fork reversal (RFR). RuvA specifically binds to HJ cruciform DNA, conferring on it an open structure. The RuvB hexamer acts as an ATP-dependent pump, pulling dsDNA into and through the RuvAB complex. HJ branch migration allows RuvC to scan DNA until it finds its consensus sequence, where it cleaves and resolves the cruciform DNA. This chain is Holliday junction branch migration complex subunit RuvA, found in Yersinia enterocolitica serotype O:8 / biotype 1B (strain NCTC 13174 / 8081).